Here is a 258-residue protein sequence, read N- to C-terminus: Hydroxyacylglutathione hydrolase (258 aa).

Residues H56, H58, D60, H61, H112, D132, and H170 each contribute to the Zn(2+) site.

It belongs to the metallo-beta-lactamase superfamily. Glyoxalase II family. In terms of assembly, monomer. Requires Zn(2+) as cofactor.

The enzyme catalyses an S-(2-hydroxyacyl)glutathione + H2O = a 2-hydroxy carboxylate + glutathione + H(+). The protein operates within secondary metabolite metabolism; methylglyoxal degradation; (R)-lactate from methylglyoxal: step 2/2. Thiolesterase that catalyzes the hydrolysis of S-D-lactoyl-glutathione to form glutathione and D-lactic acid. This chain is Hydroxyacylglutathione hydrolase, found in Pseudomonas aeruginosa (strain LESB58).